A 192-amino-acid polypeptide reads, in one-letter code: Pyridoxal 5'-phosphate synthase subunit PdxT (192 aa).

46 to 48 contacts L-glutamine; the sequence is GES. Cysteine 78 serves as the catalytic Nucleophile. L-glutamine contacts are provided by residues arginine 106 and 135 to 136; that span reads IR. Residues histidine 171 and glutamate 173 each act as charge relay system in the active site.

Belongs to the glutaminase PdxT/SNO family. In terms of assembly, in the presence of PdxS, forms a dodecamer of heterodimers. Only shows activity in the heterodimer.

It catalyses the reaction aldehydo-D-ribose 5-phosphate + D-glyceraldehyde 3-phosphate + L-glutamine = pyridoxal 5'-phosphate + L-glutamate + phosphate + 3 H2O + H(+). The enzyme catalyses L-glutamine + H2O = L-glutamate + NH4(+). Its pathway is cofactor biosynthesis; pyridoxal 5'-phosphate biosynthesis. Its function is as follows. Catalyzes the hydrolysis of glutamine to glutamate and ammonia as part of the biosynthesis of pyridoxal 5'-phosphate. The resulting ammonia molecule is channeled to the active site of PdxS. The protein is Pyridoxal 5'-phosphate synthase subunit PdxT of Kosmotoga olearia (strain ATCC BAA-1733 / DSM 21960 / TBF 19.5.1).